The following is a 1024-amino-acid chain: MSAYAELHCLSNFSFQRGASSAAELFARAARLGYRALAITDECSLAGIVRAWQAAREYRVKLLVGSEIRLEQGPKLVLLAEDLAGYQQLCRLITRGRRRADKGSYRLLREDLQPALDGVLAIWLAEPGDDDDAAWLGECFPQRLWLGVELHRGADDDARLRGLLALAARAQLPAVACGDVHMHCRGRRALQDCMTAIRNHLPVSEAGAHLFANGERHLRPLAALQGIYPEALLAETLRIAERCRFDLEQLKYQYPRELVPAGHDPASWLRRLTEKGIRRRWPDGASAKVREQIEKELKLISELGYESYFLTVQDIVGFARRQKILCQGRGSAANSAVCFALGITELDPERINLLFERFLSRERNEPPDIDVDFEHERREEVIQYVFNRYGRQRAALTAVVSTYHGAGAVRDVAKALGLPPDQVDALANCCGRWSDRAPSAERLMEAGFDPQSAVLRRVLALTGELVGFPRHLSQHPGGFVISEQPLDTLVPVENASMVERTVIQWDKDDLDAVGLLKVDVLALGMLSALRRSFDLLHELRGGERLSLASIPSEDPATYAMISRADTIGVFQIESRAQMAMLPRLRPEKFYDLVIQVAIVRPGPIQGDMVHPYLRRRNGEEPVAYPSVELEKVFERTLGVPLFQEQVMELAIVAADYSPGEADELRRSMAAWKRHGGLEHHRERLTRGMLANGYEADFAARIFEQIKGFGSYGFPESHAASFALLTYASSWLKRHEPAAFACALINSWPMGFYSPDQLLQDARRHAIQTRPVDVRHSRWDCSLEPIGQEQPAIRLGLRMIRGFREEDARRIEQARQAQSFTDVHDLGRRAGLDTRALELLADAGALRGLAGHRHKARWAIAGVEPQLPLFAEGPRIEEPAISLPLPSRGEELLSDYALLGTTLGPHPLKLLRVQLKARRCRASRELVGMEHGRPVRIAGLVVGRQRPQTASGVTFITLEDEFGMVNVVVWHDLAERQRRPFLESRLLQVEGTLESSSGVRHVIAGRLQDLTPLLTGLDVRSRDFH.

The protein belongs to the DNA polymerase type-C family. DnaE2 subfamily.

It localises to the cytoplasm. It catalyses the reaction DNA(n) + a 2'-deoxyribonucleoside 5'-triphosphate = DNA(n+1) + diphosphate. DNA polymerase involved in damage-induced mutagenesis and translesion synthesis (TLS). It is not the major replicative DNA polymerase. In Pseudomonas paraeruginosa (strain DSM 24068 / PA7) (Pseudomonas aeruginosa (strain PA7)), this protein is Error-prone DNA polymerase.